Reading from the N-terminus, the 573-residue chain is Sulfite reductase [NADPH] hemoprotein beta-component (573 aa).

The [4Fe-4S] cluster site is built by Cys-438, Cys-444, Cys-483, and Cys-487. Cys-487 serves as a coordination point for siroheme.

Belongs to the nitrite and sulfite reductase 4Fe-4S domain family. In terms of assembly, alpha(8)-beta(8). The alpha component is a flavoprotein, the beta component is a hemoprotein. Siroheme serves as cofactor. [4Fe-4S] cluster is required as a cofactor.

The catalysed reaction is hydrogen sulfide + 3 NADP(+) + 3 H2O = sulfite + 3 NADPH + 4 H(+). Its pathway is sulfur metabolism; hydrogen sulfide biosynthesis; hydrogen sulfide from sulfite (NADPH route): step 1/1. Its function is as follows. Component of the sulfite reductase complex that catalyzes the 6-electron reduction of sulfite to sulfide. This is one of several activities required for the biosynthesis of L-cysteine from sulfate. The sequence is that of Sulfite reductase [NADPH] hemoprotein beta-component from Nitrosomonas europaea (strain ATCC 19718 / CIP 103999 / KCTC 2705 / NBRC 14298).